Here is an 828-residue protein sequence, read N- to C-terminus: Glycerol-3-phosphate acyltransferase 1, mitochondrial (828 aa).

Residues 1–87 (MEESSVTIGT…FFNPSIPSLG (87 aa)) are Cytoplasmic-facing. The interval 80-120 (NPSIPSLGLRNVIYINETHTRHRGWLARRLSYILFVQERDV) is important for mitochondrial localization. The stretch at 88 to 118 (LRNVIYINETHTRHRGWLARRLSYILFVQER) is an intramembrane region. Residues 119 to 828 (DVHKGMFATS…LEYILSFVVL (710 aa)) lie on the Cytoplasmic side of the membrane. Positions 230-235 (HRSHID) match the HXXXXD motif motif. Arginine 278, arginine 279, lysine 288, arginine 293, and arginine 328 together coordinate CoA. Residue serine 380 is modified to Phosphoserine. Residue arginine 462 coordinates CoA. 2 positions are modified to phosphoserine: serine 688 and serine 695. An N6-acetyllysine mark is found at lysine 780 and lysine 784.

It belongs to the GPAT/DAPAT family.

Its subcellular location is the mitochondrion outer membrane. It carries out the reaction sn-glycerol 3-phosphate + an acyl-CoA = a 1-acyl-sn-glycero-3-phosphate + CoA. It catalyses the reaction sn-glycerol 3-phosphate + hexadecanoyl-CoA = 1-hexadecanoyl-sn-glycero-3-phosphate + CoA. The catalysed reaction is (9Z,12Z)-octadecadienoyl-CoA + sn-glycerol 3-phosphate = 1-(9Z,12Z)-octadecadienoyl-sn-glycero-3-phosphate + CoA. The enzyme catalyses sn-glycerol 3-phosphate + (9Z)-octadecenoyl-CoA = 1-(9Z-octadecenoyl)-sn-glycero-3-phosphate + CoA. It carries out the reaction sn-glycerol 3-phosphate + octadecanoyl-CoA = 1-octadecanoyl-sn-glycero-3-phosphate + CoA. It catalyses the reaction dodecanoyl-CoA + sn-glycerol 3-phosphate = 1-dodecanoyl-sn-glycerol 3-phosphate + CoA. The catalysed reaction is 1-acyl-sn-glycero-3-phospho-(1'-sn-glycerol) + an acyl-CoA = a 1,2-diacyl-sn-glycero-3-phospho-(1'-sn-glycerol) + CoA. It functions in the pathway phospholipid metabolism; CDP-diacylglycerol biosynthesis; CDP-diacylglycerol from sn-glycerol 3-phosphate: step 1/3. In terms of biological role, mitochondrial membrane protein that catalyzes the essential first step of biosynthesis of glycerolipids such as triglycerides, phosphatidic acids and lysophosphatidic acids. Esterifies acyl-group from acyl-coenzyme A (acyl-CoA) to the sn-1 position of glycerol-3-phosphate, to produce lysophosphatidic acid. Has a narrow hydrophobic binding cleft that selects for a linear acyl chain. Catalytic activity is higher for substrates with a 16-carbon acyl chain. This is Glycerol-3-phosphate acyltransferase 1, mitochondrial from Rattus norvegicus (Rat).